A 450-amino-acid chain; its full sequence is Phosphoglucosamine mutase (450 aa).

The Phosphoserine intermediate role is filled by S101. Residues S101, D241, D243, and D245 each contribute to the Mg(2+) site. A Phosphoserine modification is found at S101.

This sequence belongs to the phosphohexose mutase family. It depends on Mg(2+) as a cofactor. Post-translationally, activated by phosphorylation.

It catalyses the reaction alpha-D-glucosamine 1-phosphate = D-glucosamine 6-phosphate. Functionally, catalyzes the conversion of glucosamine-6-phosphate to glucosamine-1-phosphate. The sequence is that of Phosphoglucosamine mutase from Listeria welshimeri serovar 6b (strain ATCC 35897 / DSM 20650 / CCUG 15529 / CIP 8149 / NCTC 11857 / SLCC 5334 / V8).